We begin with the raw amino-acid sequence, 397 residues long: Tryptophan synthase beta chain (397 aa).

At Lys-87 the chain carries N6-(pyridoxal phosphate)lysine.

It belongs to the TrpB family. In terms of assembly, tetramer of two alpha and two beta chains. It depends on pyridoxal 5'-phosphate as a cofactor.

It carries out the reaction (1S,2R)-1-C-(indol-3-yl)glycerol 3-phosphate + L-serine = D-glyceraldehyde 3-phosphate + L-tryptophan + H2O. The protein operates within amino-acid biosynthesis; L-tryptophan biosynthesis; L-tryptophan from chorismate: step 5/5. In terms of biological role, the beta subunit is responsible for the synthesis of L-tryptophan from indole and L-serine. The sequence is that of Tryptophan synthase beta chain from Escherichia coli O127:H6 (strain E2348/69 / EPEC).